Consider the following 173-residue polypeptide: Ribosome maturation factor RimM (173 aa).

One can recognise a PRC barrel domain in the interval 98–170 (EDEYYWCDLL…RMTVSLPEGL (73 aa)).

It belongs to the RimM family. In terms of assembly, binds ribosomal protein uS19.

It is found in the cytoplasm. Functionally, an accessory protein needed during the final step in the assembly of 30S ribosomal subunit, possibly for assembly of the head region. Essential for efficient processing of 16S rRNA. May be needed both before and after RbfA during the maturation of 16S rRNA. It has affinity for free ribosomal 30S subunits but not for 70S ribosomes. The protein is Ribosome maturation factor RimM of Geotalea uraniireducens (strain Rf4) (Geobacter uraniireducens).